We begin with the raw amino-acid sequence, 1061 residues long: Translation initiation factor IF-2 (1061 aa).

2 disordered regions span residues Phe-51–Lys-199 and Ala-250–Glu-460. Residues Asn-67–Arg-77 are compositionally biased toward basic and acidic residues. Low complexity-rich tracts occupy residues Val-97–Val-113, Arg-120–Ala-130, Val-167–Val-177, Thr-184–Lys-199, and Ala-250–Pro-278. Positions Pro-279–Pro-291 are enriched in pro residues. Residues Ser-340 to Gly-360 are compositionally biased toward gly residues. The span at Gly-381–Gly-391 shows a compositional bias: low complexity. The segment covering Gln-392 to Ala-405 has biased composition (gly residues). Residues Ser-552–Lys-728 form the tr-type G domain. Residues Gly-561–Thr-568 form a G1 region. Gly-561–Thr-568 contributes to the GTP binding site. The G2 stretch occupies residues Gly-586 to His-590. Residues Asp-614–Gly-617 are G3. Residues Asp-614–His-618 and Asn-668–Asp-671 contribute to the GTP site. Positions Asn-668 to Asp-671 are G4. A G5 region spans residues Ser-704–Lys-706.

Belongs to the TRAFAC class translation factor GTPase superfamily. Classic translation factor GTPase family. IF-2 subfamily.

It is found in the cytoplasm. Its function is as follows. One of the essential components for the initiation of protein synthesis. Protects formylmethionyl-tRNA from spontaneous hydrolysis and promotes its binding to the 30S ribosomal subunits. Also involved in the hydrolysis of GTP during the formation of the 70S ribosomal complex. The polypeptide is Translation initiation factor IF-2 (Acidobacterium capsulatum (strain ATCC 51196 / DSM 11244 / BCRC 80197 / JCM 7670 / NBRC 15755 / NCIMB 13165 / 161)).